The following is a 138-amino-acid chain: MTLSVRIITPDKIVWDDEAEEIILPSTTGQLGILSGHAPLLTALNIGVVRVRPGKDWQTIAVMGGFAEVENNEVKILVNGAEAGAKIDKDTAQQEWNEAQKRLDEASKSGDRQKQIQAEQAWKRARARFQASGGFVQV.

Over residues 89-114 (KDTAQQEWNEAQKRLDEASKSGDRQK) the composition is skewed to basic and acidic residues. The segment at 89–117 (KDTAQQEWNEAQKRLDEASKSGDRQKQIQ) is disordered.

It belongs to the ATPase epsilon chain family. As to quaternary structure, F-type ATPases have 2 components, CF(1) - the catalytic core - and CF(0) - the membrane proton channel. CF(1) has five subunits: alpha(3), beta(3), gamma(1), delta(1), epsilon(1). CF(0) has three main subunits: a, b and c.

Its subcellular location is the cellular thylakoid membrane. Functionally, produces ATP from ADP in the presence of a proton gradient across the membrane. The sequence is that of ATP synthase epsilon chain from Gloeothece citriformis (strain PCC 7424) (Cyanothece sp. (strain PCC 7424)).